Consider the following 757-residue polypeptide: Large ribosomal subunit protein mL102 (rPPR5) (757 aa).

Over residues 39–55 (EETQTPANANPETQSPD) the composition is skewed to polar residues. The disordered stretch occupies residues 39-82 (EETQTPANANPETQSPDAKSETKKNLTSTETRPLRERFQRGKRQ). A compositionally biased stretch (basic and acidic residues) spans 70-82 (RPLRERFQRGKRQ). PPR repeat units lie at residues 149 to 183 (DRDT…GVPW), 184 to 218 (DEDM…GVER), 219 to 253 (TIKS…GVEP), 254 to 288 (TRHT…GISP), 289 to 323 (DDAT…KIGP), 324 to 358 (SVVS…GIEP), 359 to 393 (NATT…HIAP), 395 to 429 (DNSI…NVPA), 430 to 464 (EAGH…EIIL), 473 to 507 (EPSA…GVQD), 510 to 541 (ALNN…GVPR), 542 to 576 (ESNA…GHVP), 577 to 611 (DSSL…NVGI), 614 to 648 (NMDL…GHTA), 651 to 680 (DSLL…DLSL), and 681 to 715 (EFSS…GSST).

Belongs to the PPR family. P subfamily. Component of the mitochondrial ribosome large subunit.

The protein localises to the mitochondrion. The polypeptide is Large ribosomal subunit protein mL102 (rPPR5) (Arabidopsis thaliana (Mouse-ear cress)).